Here is a 117-residue protein sequence, read N- to C-terminus: MARVKTGVVRRRRHKKVLKLARGFYSGRRKHFRKAKEQLERSLVYAYRDRRRKKRDFRRLWIVRINAACRLNDISYSKFINGLKKAGIELDRKILADLAMNDAAAFAKIADAAKKAL.

Belongs to the bacterial ribosomal protein bL20 family.

Binds directly to 23S ribosomal RNA and is necessary for the in vitro assembly process of the 50S ribosomal subunit. It is not involved in the protein synthesizing functions of that subunit. This is Large ribosomal subunit protein bL20 from Campylobacter lari (strain RM2100 / D67 / ATCC BAA-1060).